The chain runs to 417 residues: uncharacterized protein (417 aa).

Belongs to the MG032/MG096/MG288 family.

This is an uncharacterized protein from Mycoplasma pneumoniae (strain ATCC 29342 / M129 / Subtype 1) (Mycoplasmoides pneumoniae).